Reading from the N-terminus, the 177-residue chain is MSAEDPNAGEDADAEEEEDIRYFVRIGQTDLDGTKSVERALTELNGIGHRAARIIAQKADVDRRAVFGKLDDDVIERVVERVENFADDVPEWMTNHQKDYFTGETTHETGNDLQLTRRQDINRMKMIDSYRGVRHKRGQKVRGQRTKSTGRTEGTIGVNVEAIKEEQAEDAAAEDDE.

The segment covering 132 to 145 has biased composition (basic residues); sequence GVRHKRGQKVRGQR. The segment at 132–177 is disordered; sequence GVRHKRGQKVRGQRTKSTGRTEGTIGVNVEAIKEEQAEDAAAEDDE. The segment covering 167–177 has biased composition (acidic residues); the sequence is QAEDAAAEDDE.

The protein belongs to the universal ribosomal protein uS13 family. In terms of assembly, part of the 30S ribosomal subunit. Forms a loose heterodimer with protein S19. Forms two bridges to the 50S subunit in the 70S ribosome.

Functionally, located at the top of the head of the 30S subunit, it contacts several helices of the 16S rRNA. In the 70S ribosome it contacts the 23S rRNA (bridge B1a) and protein L5 of the 50S subunit (bridge B1b), connecting the 2 subunits; these bridges are implicated in subunit movement. The polypeptide is Small ribosomal subunit protein uS13 (Haloarcula marismortui (strain ATCC 43049 / DSM 3752 / JCM 8966 / VKM B-1809) (Halobacterium marismortui)).